The sequence spans 405 residues: Acetylornithine/succinyldiaminopimelate aminotransferase (405 aa).

Pyridoxal 5'-phosphate is bound by residues 108-109 (GT) and Phe141. Arg144 is a N(2)-acetyl-L-ornithine binding site. A pyridoxal 5'-phosphate-binding site is contributed by 226 to 229 (DEVQ). Position 255 is an N6-(pyridoxal phosphate)lysine (Lys255). Ser283 lines the N(2)-acetyl-L-ornithine pocket. Thr284 serves as a coordination point for pyridoxal 5'-phosphate.

This sequence belongs to the class-III pyridoxal-phosphate-dependent aminotransferase family. ArgD subfamily. As to quaternary structure, homodimer. Pyridoxal 5'-phosphate is required as a cofactor.

The protein localises to the cytoplasm. It carries out the reaction N(2)-acetyl-L-ornithine + 2-oxoglutarate = N-acetyl-L-glutamate 5-semialdehyde + L-glutamate. The catalysed reaction is N-succinyl-(2S,6S)-2,6-diaminopimelate + 2-oxoglutarate = (S)-2-succinylamino-6-oxoheptanedioate + L-glutamate. It functions in the pathway amino-acid biosynthesis; L-arginine biosynthesis; N(2)-acetyl-L-ornithine from L-glutamate: step 4/4. The protein operates within amino-acid biosynthesis; L-lysine biosynthesis via DAP pathway; LL-2,6-diaminopimelate from (S)-tetrahydrodipicolinate (succinylase route): step 2/3. In terms of biological role, involved in both the arginine and lysine biosynthetic pathways. The polypeptide is Acetylornithine/succinyldiaminopimelate aminotransferase (Salmonella typhi).